We begin with the raw amino-acid sequence, 167 residues long: Small ribosomal subunit protein uS3m (167 aa).

The N-terminal 35 residues, 1 to 35, are a transit peptide targeting the mitochondrion; it reads MAWSASVRGLGQRVLACSRELPGAWRTLHTSAVCA.

It belongs to the universal ribosomal protein uS3 family. As to quaternary structure, component of the mitochondrial ribosome small subunit (28S) which comprises a 12S rRNA and about 30 distinct proteins.

The protein resides in the mitochondrion. The protein is Small ribosomal subunit protein uS3m (Mrps24) of Mus musculus (Mouse).